The chain runs to 361 residues: 3-dehydroquinate synthase (361 aa).

Belongs to the archaeal-type DHQ synthase family.

It catalyses the reaction 2-amino-2,3,7-trideoxy-D-lyxo-hept-6-ulosonate + NAD(+) + H2O = 3-dehydroquinate + NH4(+) + NADH + H(+). Catalyzes the oxidative deamination and cyclization of 2-amino-3,7-dideoxy-D-threo-hept-6-ulosonic acid (ADH) to yield 3-dehydroquinate (DHQ), which is fed into the canonical shikimic pathway of aromatic amino acid biosynthesis. This Methanococcus maripaludis (strain C5 / ATCC BAA-1333) protein is 3-dehydroquinate synthase.